A 263-amino-acid chain; its full sequence is Putative replication protein PDa0002 (263 aa).

The sequence is that of Putative replication protein PDa0002 from Xylella fastidiosa (strain Temecula1 / ATCC 700964).